A 146-amino-acid chain; its full sequence is Hemoglobin subunit beta (146 aa).

In terms of domain architecture, Globin spans 2–146; sequence HWSAEEKQLI…VAHALARKYH (145 aa). His63 and His92 together coordinate heme b.

Belongs to the globin family. Heterotetramer of two alpha chains and two beta chains. In terms of tissue distribution, red blood cells.

Its function is as follows. Involved in oxygen transport from the lung to the various peripheral tissues. The chain is Hemoglobin subunit beta (HBB) from Anseranas semipalmata (Magpie goose).